Consider the following 190-residue polypeptide: Elongation factor P-like protein (190 aa).

This sequence belongs to the elongation factor P family.

The polypeptide is Elongation factor P-like protein (Yersinia enterocolitica serotype O:8 / biotype 1B (strain NCTC 13174 / 8081)).